The chain runs to 95 residues: Acylphosphatase (95 aa).

Residues 5 to 93 enclose the Acylphosphatase-like domain; the sequence is RAHVFIRGKV…GEFKDFKILP (89 aa). Residues Arg20 and Asn38 contribute to the active site.

This sequence belongs to the acylphosphatase family.

It catalyses the reaction an acyl phosphate + H2O = a carboxylate + phosphate + H(+). The polypeptide is Acylphosphatase (acyP) (Pyrobaculum aerophilum (strain ATCC 51768 / DSM 7523 / JCM 9630 / CIP 104966 / NBRC 100827 / IM2)).